The following is a 495-amino-acid chain: Galactose-1-phosphate uridylyltransferase (495 aa).

The protein belongs to the galactose-1-phosphate uridylyltransferase type 2 family.

The protein resides in the cytoplasm. The enzyme catalyses alpha-D-galactose 1-phosphate + UDP-alpha-D-glucose = alpha-D-glucose 1-phosphate + UDP-alpha-D-galactose. Its pathway is carbohydrate metabolism; galactose metabolism. This Ligilactobacillus salivarius (strain UCC118) (Lactobacillus salivarius) protein is Galactose-1-phosphate uridylyltransferase.